We begin with the raw amino-acid sequence, 246 residues long: DNA repair protein RecO (246 aa).

Belongs to the RecO family.

Functionally, involved in DNA repair and RecF pathway recombination. This chain is DNA repair protein RecO, found in Marinobacter nauticus (strain ATCC 700491 / DSM 11845 / VT8) (Marinobacter aquaeolei).